Here is a 62-residue protein sequence, read N- to C-terminus: Large ribosomal subunit protein eL37 (62 aa).

4 residues coordinate Zn(2+): Cys20, Cys23, Cys35, and Cys38. A C4-type zinc finger spans residues 20 to 38 (CRRCGRRSYHVRKKACSAC).

The protein belongs to the eukaryotic ribosomal protein eL37 family. It depends on Zn(2+) as a cofactor.

In terms of biological role, binds to the 23S rRNA. This is Large ribosomal subunit protein eL37 from Methanococcus aeolicus (strain ATCC BAA-1280 / DSM 17508 / OCM 812 / Nankai-3).